Reading from the N-terminus, the 279-residue chain is Tryptophan synthase alpha chain (279 aa).

Catalysis depends on proton acceptor residues Glu-50 and Asp-61.

The protein belongs to the TrpA family. Tetramer of two alpha and two beta chains.

The catalysed reaction is (1S,2R)-1-C-(indol-3-yl)glycerol 3-phosphate + L-serine = D-glyceraldehyde 3-phosphate + L-tryptophan + H2O. The protein operates within amino-acid biosynthesis; L-tryptophan biosynthesis; L-tryptophan from chorismate: step 5/5. Functionally, the alpha subunit is responsible for the aldol cleavage of indoleglycerol phosphate to indole and glyceraldehyde 3-phosphate. The protein is Tryptophan synthase alpha chain of Azorhizobium caulinodans (strain ATCC 43989 / DSM 5975 / JCM 20966 / LMG 6465 / NBRC 14845 / NCIMB 13405 / ORS 571).